A 114-amino-acid polypeptide reads, in one-letter code: MATEVAARLRGARISAQKARLVADQVRGLEVEKALNLLEFSPKKAAKIVKKVLESAIANAENNDGADVDELKVSTVFVDEGMTMKRIRPRAKGRADRILKRTCHITVKVSEGQE.

The protein belongs to the universal ribosomal protein uL22 family. In terms of assembly, part of the 50S ribosomal subunit.

In terms of biological role, this protein binds specifically to 23S rRNA; its binding is stimulated by other ribosomal proteins, e.g. L4, L17, and L20. It is important during the early stages of 50S assembly. It makes multiple contacts with different domains of the 23S rRNA in the assembled 50S subunit and ribosome. The globular domain of the protein is located near the polypeptide exit tunnel on the outside of the subunit, while an extended beta-hairpin is found that lines the wall of the exit tunnel in the center of the 70S ribosome. The protein is Large ribosomal subunit protein uL22 of Alcanivorax borkumensis (strain ATCC 700651 / DSM 11573 / NCIMB 13689 / SK2).